The primary structure comprises 566 residues: Good for full DBP5 activity protein 2 (566 aa).

The segment covering 1–16 (MQVQKMVRDNSNNGSD) has biased composition (polar residues). Residues 1–41 (MQVQKMVRDNSNNGSDKSVHWERRNNNGAGPRYRSRSGNTG) form a disordered region.

High-copy suppressor of DBP5 mutation. The chain is Good for full DBP5 activity protein 2 (GFD2) from Saccharomyces cerevisiae (strain ATCC 204508 / S288c) (Baker's yeast).